The chain runs to 179 residues: uncharacterized protein (179 aa).

The interval 160 to 179 (QPIEPNGTQPATETKTPVGV) is disordered. Residues 165 to 179 (NGTQPATETKTPVGV) are compositionally biased toward polar residues.

This sequence belongs to the Dps family.

This is an uncharacterized protein from Anabaena variabilis.